Here is a 648-residue protein sequence, read N- to C-terminus: Replication restart protein PriA (648 aa).

Residues T131–L297 form the Helicase ATP-binding domain. An ATP-binding site is contributed by G144–T151. The short motif at D240–H243 is the DEAH box element. Zn(2+) is bound by residues C358, C361, C367, C370, C385, C388, C398, and C401. Residues K393–R548 enclose the Helicase C-terminal domain.

This sequence belongs to the helicase family. PriA subfamily. As to quaternary structure, component of the replication restart primosome. Zn(2+) is required as a cofactor.

It carries out the reaction Couples ATP hydrolysis with the unwinding of duplex DNA by translocating in the 3'-5' direction.. It catalyses the reaction ATP + H2O = ADP + phosphate + H(+). Its function is as follows. Initiates the restart of stalled replication forks, which reloads the replicative helicase on sites other than the origin of replication. Recognizes and binds to abandoned replication forks and remodels them to uncover a helicase loading site. Promotes assembly of the primosome at these replication forks. This is Replication restart protein PriA from Rickettsia typhi (strain ATCC VR-144 / Wilmington).